We begin with the raw amino-acid sequence, 343 residues long: Selenide, water dikinase (343 aa).

The active site involves cysteine 15. ATP contacts are provided by residues lysine 18 and 46–48; that span reads HKD. Aspartate 49 contacts Mg(2+). ATP is bound by residues aspartate 66, aspartate 89, and 137 to 139; that span reads GHS. Position 89 (aspartate 89) interacts with Mg(2+). Mg(2+) is bound at residue aspartate 225.

It belongs to the selenophosphate synthase 1 family. Class I subfamily. Homodimer. It depends on Mg(2+) as a cofactor.

The catalysed reaction is hydrogenselenide + ATP + H2O = selenophosphate + AMP + phosphate + 2 H(+). In terms of biological role, synthesizes selenophosphate from selenide and ATP. This Sulfurimonas denitrificans (strain ATCC 33889 / DSM 1251) (Thiomicrospira denitrificans (strain ATCC 33889 / DSM 1251)) protein is Selenide, water dikinase.